The sequence spans 562 residues: Zinc finger protein 579 (562 aa).

Over residues 1 to 11 the composition is skewed to pro residues; that stretch reads MDPQPPPPAQG. Residues 1–45 form a disordered region; that stretch reads MDPQPPPPAQGSPPHRDRGRGRGRGRGRGRGRGRGRGGAGAPRAP. Positions 17 to 35 are enriched in basic residues; the sequence is DRGRGRGRGRGRGRGRGRG. 3 C2H2-type zinc fingers span residues 46–68, 74–96, and 102–125; these read LPCP…RLSH, HACP…LRGH, and LRCA…AQEH. Arg94 bears the Omega-N-methylarginine mark. Disordered regions lie at residues 120–154 and 166–199; these read HLAQ…EGVE and EEAT…AEAG. A compositionally biased stretch (basic and acidic residues) spans 187–197; that stretch reads DPRESEAKEAE. Ser191 carries the post-translational modification Phosphoserine. 2 C2H2-type zinc fingers span residues 267-289 and 295-317; these read HQCS…RLVH and FVCP…RRVH. A disordered region spans residues 321-377; sequence SLLAPLPGAGKKDDKASGGRNSGKGPEGGEGAECGGASEGGEGGHNGGDATPARPPA. The segment covering 340-367 has biased composition (gly residues); that stretch reads RNSGKGPEGGEGAECGGASEGGEGGHNG. C2H2-type zinc fingers lie at residues 382-404, 410-432, and 439-461; these read FWCP…GVTH, FQCV…AQVH, and HPCP…QRCH. Ser486 is modified (phosphoserine). Residues 505–530 form a disordered region; that stretch reads AHIKEEPPSPGTPPQSPPAPPVFLSA. Residues 512–525 are compositionally biased toward pro residues; it reads PSPGTPPQSPPAPP.

This sequence belongs to the krueppel C2H2-type zinc-finger protein family.

The protein resides in the nucleus. Its function is as follows. May be involved in transcriptional regulation. This is Zinc finger protein 579 (Znf579) from Mus musculus (Mouse).